Reading from the N-terminus, the 345-residue chain is Holliday junction branch migration complex subunit RuvB (345 aa).

Residues 1 to 183 (MTTQRLVSAA…FGIVHRLEFY (183 aa)) are large ATPase domain (RuvB-L). ATP is bound by residues isoleucine 22, arginine 23, glycine 64, lysine 67, threonine 68, threonine 69, 130–132 (EDY), arginine 173, tyrosine 183, and arginine 220. Threonine 68 serves as a coordination point for Mg(2+). Residues 184 to 254 (SVEELSRIVA…VAGKALEMLD (71 aa)) are small ATPAse domain (RuvB-S). A head domain (RuvB-H) region spans residues 257-345 (PNGFDQSDRR…NVNEELFGDE (89 aa)). Residues arginine 293, arginine 312, and arginine 317 each coordinate DNA.

The protein belongs to the RuvB family. In terms of assembly, homohexamer. Forms an RuvA(8)-RuvB(12)-Holliday junction (HJ) complex. HJ DNA is sandwiched between 2 RuvA tetramers; dsDNA enters through RuvA and exits via RuvB. An RuvB hexamer assembles on each DNA strand where it exits the tetramer. Each RuvB hexamer is contacted by two RuvA subunits (via domain III) on 2 adjacent RuvB subunits; this complex drives branch migration. In the full resolvosome a probable DNA-RuvA(4)-RuvB(12)-RuvC(2) complex forms which resolves the HJ.

It localises to the cytoplasm. The enzyme catalyses ATP + H2O = ADP + phosphate + H(+). The RuvA-RuvB-RuvC complex processes Holliday junction (HJ) DNA during genetic recombination and DNA repair, while the RuvA-RuvB complex plays an important role in the rescue of blocked DNA replication forks via replication fork reversal (RFR). RuvA specifically binds to HJ cruciform DNA, conferring on it an open structure. The RuvB hexamer acts as an ATP-dependent pump, pulling dsDNA into and through the RuvAB complex. RuvB forms 2 homohexamers on either side of HJ DNA bound by 1 or 2 RuvA tetramers; 4 subunits per hexamer contact DNA at a time. Coordinated motions by a converter formed by DNA-disengaged RuvB subunits stimulates ATP hydrolysis and nucleotide exchange. Immobilization of the converter enables RuvB to convert the ATP-contained energy into a lever motion, pulling 2 nucleotides of DNA out of the RuvA tetramer per ATP hydrolyzed, thus driving DNA branch migration. The RuvB motors rotate together with the DNA substrate, which together with the progressing nucleotide cycle form the mechanistic basis for DNA recombination by continuous HJ branch migration. Branch migration allows RuvC to scan DNA until it finds its consensus sequence, where it cleaves and resolves cruciform DNA. The protein is Holliday junction branch migration complex subunit RuvB of Methylococcus capsulatus (strain ATCC 33009 / NCIMB 11132 / Bath).